We begin with the raw amino-acid sequence, 548 residues long: Probable bifunctional tRNA threonylcarbamoyladenosine biosynthesis protein (548 aa).

Positions 1-338 (MRILGIEGTA…FRPDEVAVTW (338 aa)) are kae1. Residues His-122 and His-126 each coordinate Fe cation. L-threonylcarbamoyladenylate contacts are provided by residues 143-147 (NASGA), Asp-175, Gly-188, Glu-192, and Asn-271. Asp-299 is a binding site for Fe cation. In terms of domain architecture, Protein kinase spans 349–548 (RMGGDEVQGA…DDIEGRGRYQ (200 aa)). Residues 355–362 (VQGAEATV) and Lys-371 each bind ATP. The span at 390–404 (ERTRQEARLTSEARR) shows a compositional bias: basic and acidic residues. The tract at residues 390-413 (ERTRQEARLTSEARRNGVPTPLVR) is disordered. Residue Asp-460 is the Proton acceptor; for kinase activity of the active site.

In the N-terminal section; belongs to the KAE1 / TsaD family. The protein in the C-terminal section; belongs to the protein kinase superfamily. Tyr protein kinase family. BUD32 subfamily. As to quaternary structure, component of the KEOPS complex that consists of Kae1, Bud32, Cgi121 and Pcc1; the whole complex dimerizes. It depends on Fe(2+) as a cofactor.

It localises to the cytoplasm. The catalysed reaction is L-seryl-[protein] + ATP = O-phospho-L-seryl-[protein] + ADP + H(+). It catalyses the reaction L-threonyl-[protein] + ATP = O-phospho-L-threonyl-[protein] + ADP + H(+). The enzyme catalyses L-threonylcarbamoyladenylate + adenosine(37) in tRNA = N(6)-L-threonylcarbamoyladenosine(37) in tRNA + AMP + H(+). Required for the formation of a threonylcarbamoyl group on adenosine at position 37 (t(6)A37) in tRNAs that read codons beginning with adenine. Is a component of the KEOPS complex that is probably involved in the transfer of the threonylcarbamoyl moiety of threonylcarbamoyl-AMP (TC-AMP) to the N6 group of A37. The Kae1 domain likely plays a direct catalytic role in this reaction. The Bud32 domain probably displays kinase activity that regulates Kae1 function. This Haloarcula marismortui (strain ATCC 43049 / DSM 3752 / JCM 8966 / VKM B-1809) (Halobacterium marismortui) protein is Probable bifunctional tRNA threonylcarbamoyladenosine biosynthesis protein.